A 247-amino-acid polypeptide reads, in one-letter code: Carboxy-S-adenosyl-L-methionine synthase (247 aa).

S-adenosyl-L-methionine-binding positions include Tyr-39, 64 to 66, 89 to 90, 117 to 118, Asn-132, and Arg-199; these read GCS, DN, and DI.

It belongs to the class I-like SAM-binding methyltransferase superfamily. Cx-SAM synthase family. In terms of assembly, homodimer.

It catalyses the reaction prephenate + S-adenosyl-L-methionine = carboxy-S-adenosyl-L-methionine + 3-phenylpyruvate + H2O. Catalyzes the conversion of S-adenosyl-L-methionine (SAM) to carboxy-S-adenosyl-L-methionine (Cx-SAM). This Citrobacter koseri (strain ATCC BAA-895 / CDC 4225-83 / SGSC4696) protein is Carboxy-S-adenosyl-L-methionine synthase.